A 223-amino-acid chain; its full sequence is 2-C-methyl-D-erythritol 4-phosphate cytidylyltransferase (223 aa).

It belongs to the IspD/TarI cytidylyltransferase family. IspD subfamily.

It catalyses the reaction 2-C-methyl-D-erythritol 4-phosphate + CTP + H(+) = 4-CDP-2-C-methyl-D-erythritol + diphosphate. It participates in isoprenoid biosynthesis; isopentenyl diphosphate biosynthesis via DXP pathway; isopentenyl diphosphate from 1-deoxy-D-xylulose 5-phosphate: step 2/6. Functionally, catalyzes the formation of 4-diphosphocytidyl-2-C-methyl-D-erythritol from CTP and 2-C-methyl-D-erythritol 4-phosphate (MEP). The protein is 2-C-methyl-D-erythritol 4-phosphate cytidylyltransferase of Synechococcus sp. (strain WH7803).